A 559-amino-acid polypeptide reads, in one-letter code: DnaJ homolog subfamily C member 11 (559 aa).

Ala-2 carries the N-acetylalanine modification. Residues 14–82 (DYYSLLNVRR…QTRAIYDIYG (69 aa)) enclose the J domain. Ser-204 is modified (phosphoserine). Residues 417 to 457 (EKELEKQRESAATDVLQKKQEAESAVRLMQESVRRIIEAEE) adopt a coiled-coil conformation.

Belongs to the DNAJC11 family. As to quaternary structure, associates with the mitochondrial contact site and cristae organizing system (MICOS) complex, composed of at least MICOS10/MIC10, CHCHD3/MIC19, CHCHD6/MIC25, APOOL/MIC27, IMMT/MIC60, APOO/MIC23/MIC26 and QIL1/MIC13. This complex was also known under the names MINOS or MitOS complex. The MICOS complex associates with mitochondrial outer membrane proteins SAMM50, MTX1 and MTX2 (together described as components of the mitochondrial outer membrane sorting assembly machinery (SAM) complex) and DNAJC11, mitochondrial inner membrane protein TMEM11 and with HSPA9. The MICOS and SAM complexes together with DNAJC11 are part of a large protein complex spanning both membranes termed the mitochondrial intermembrane space bridging (MIB) complex.

The protein localises to the mitochondrion. It localises to the mitochondrion outer membrane. Its function is as follows. Required for mitochondrial inner membrane organization. Seems to function through its association with the MICOS complex and the mitochondrial outer membrane sorting assembly machinery (SAM) complex. The polypeptide is DnaJ homolog subfamily C member 11 (DNAJC11) (Pongo abelii (Sumatran orangutan)).